Consider the following 243-residue polypeptide: MNRIKAVGYENNELKEKAQLLADQLNLQLDQNADTCLFVTPEKLTLKIRNFSLMFADFSAMTWSKRRGEGKKQGLIRACKPTKGIKIFDATAGWGKDAAILATFGADVLMLERHPVMAALLADALSRRNEADIQKMCLSLIASDAISFLHSLQEKDYPDIIYIDPMHPERNKSALVKKEMQVLQQLIGTDYDAMELIKLSLSHVKSRVVVKWPQKVKPLLPPDASIDGKTVRFDIYMPQFSSN.

Residues 112 to 113 (ER) and D164 each bind S-adenosyl-L-methionine.

The protein belongs to the methyltransferase superfamily. RsmJ family.

It is found in the cytoplasm. It catalyses the reaction guanosine(1516) in 16S rRNA + S-adenosyl-L-methionine = N(2)-methylguanosine(1516) in 16S rRNA + S-adenosyl-L-homocysteine + H(+). In terms of biological role, specifically methylates the guanosine in position 1516 of 16S rRNA. This is Ribosomal RNA small subunit methyltransferase J from Legionella pneumophila (strain Paris).